The primary structure comprises 270 residues: F-actin-capping protein subunit beta (270 aa).

Belongs to the F-actin-capping protein beta subunit family. Component of the F-actin capping complex, composed of a heterodimer of an alpha and a beta subunit.

It localises to the cytoplasm. The protein resides in the cytoskeleton. F-actin-capping proteins bind in a Ca(2+)-independent manner to the fast growing ends of actin filaments (barbed end) thereby blocking the exchange of subunits at these ends. Unlike other capping proteins (such as gelsolin and severin), these proteins do not sever actin filaments. This is F-actin-capping protein subunit beta (cap-2) from Caenorhabditis elegans.